The primary structure comprises 98 residues: UPF0235 protein azo3464 (98 aa).

This sequence belongs to the UPF0235 family.

This Azoarcus sp. (strain BH72) protein is UPF0235 protein azo3464.